The primary structure comprises 1358 residues: DNA-directed RNA polymerase subunit beta (1358 aa).

Belongs to the RNA polymerase beta chain family. In terms of assembly, the RNAP catalytic core consists of 2 alpha, 1 beta, 1 beta' and 1 omega subunit. When a sigma factor is associated with the core the holoenzyme is formed, which can initiate transcription.

It carries out the reaction RNA(n) + a ribonucleoside 5'-triphosphate = RNA(n+1) + diphosphate. DNA-dependent RNA polymerase catalyzes the transcription of DNA into RNA using the four ribonucleoside triphosphates as substrates. This chain is DNA-directed RNA polymerase subunit beta, found in Francisella tularensis subsp. tularensis (strain FSC 198).